We begin with the raw amino-acid sequence, 103 residues long: uncharacterized protein (103 aa).

Positions 1-13 (MLLSSIVSFVADA) are cleaved as a signal peptide. A glycan (N-linked (GlcNAc...) asparagine) is linked at asparagine 67. Positions 73–103 (LSSDSNRNIIDNSNNNQHPSSSSTSTSWKKF) are disordered.

It is found in the secreted. This is an uncharacterized protein from Dictyostelium discoideum (Social amoeba).